Consider the following 416-residue polypeptide: Gamma-glutamyl phosphate reductase (416 aa).

Belongs to the gamma-glutamyl phosphate reductase family.

Its subcellular location is the cytoplasm. It carries out the reaction L-glutamate 5-semialdehyde + phosphate + NADP(+) = L-glutamyl 5-phosphate + NADPH + H(+). It participates in amino-acid biosynthesis; L-proline biosynthesis; L-glutamate 5-semialdehyde from L-glutamate: step 2/2. In terms of biological role, catalyzes the NADPH-dependent reduction of L-glutamate 5-phosphate into L-glutamate 5-semialdehyde and phosphate. The product spontaneously undergoes cyclization to form 1-pyrroline-5-carboxylate. In Streptococcus thermophilus, this protein is Gamma-glutamyl phosphate reductase.